Consider the following 358-residue polypeptide: Phosphoserine aminotransferase (358 aa).

L-glutamate is bound at residue Arg41. Residues 75-76, Trp101, Thr150, Asp170, and Gln193 contribute to the pyridoxal 5'-phosphate site; that span reads AR. Lys194 is subject to N6-(pyridoxal phosphate)lysine. Residue 235 to 236 participates in pyridoxal 5'-phosphate binding; it reads NT.

This sequence belongs to the class-V pyridoxal-phosphate-dependent aminotransferase family. SerC subfamily. Homodimer. Pyridoxal 5'-phosphate is required as a cofactor.

Its subcellular location is the cytoplasm. It carries out the reaction O-phospho-L-serine + 2-oxoglutarate = 3-phosphooxypyruvate + L-glutamate. It catalyses the reaction 4-(phosphooxy)-L-threonine + 2-oxoglutarate = (R)-3-hydroxy-2-oxo-4-phosphooxybutanoate + L-glutamate. It participates in amino-acid biosynthesis; L-serine biosynthesis; L-serine from 3-phospho-D-glycerate: step 2/3. Its pathway is cofactor biosynthesis; pyridoxine 5'-phosphate biosynthesis; pyridoxine 5'-phosphate from D-erythrose 4-phosphate: step 3/5. Its function is as follows. Catalyzes the reversible conversion of 3-phosphohydroxypyruvate to phosphoserine and of 3-hydroxy-2-oxo-4-phosphonooxybutanoate to phosphohydroxythreonine. This chain is Phosphoserine aminotransferase, found in Histophilus somni (strain 129Pt) (Haemophilus somnus).